The sequence spans 107 residues: U1-lycotoxin-Ls1i (107 aa).

Positions 1–20 (MMKVLVVVALLVTLISYSSS) are cleaved as a signal peptide. A propeptide spanning residues 21 to 41 (EGIDDLEADELLSLMANEQTR) is cleaved from the precursor. Cystine bridges form between cysteine 44/cysteine 59, cysteine 51/cysteine 68, cysteine 58/cysteine 86, and cysteine 70/cysteine 84.

Belongs to the neurotoxin 19 (CSTX) family. 04 (U1-Lctx) subfamily. As to expression, expressed by the venom gland.

The protein localises to the secreted. The chain is U1-lycotoxin-Ls1i from Lycosa singoriensis (Wolf spider).